Reading from the N-terminus, the 298-residue chain is ATP phosphoribosyltransferase (298 aa).

It belongs to the ATP phosphoribosyltransferase family. Long subfamily. Mg(2+) is required as a cofactor.

It localises to the cytoplasm. The catalysed reaction is 1-(5-phospho-beta-D-ribosyl)-ATP + diphosphate = 5-phospho-alpha-D-ribose 1-diphosphate + ATP. It participates in amino-acid biosynthesis; L-histidine biosynthesis; L-histidine from 5-phospho-alpha-D-ribose 1-diphosphate: step 1/9. With respect to regulation, feedback inhibited by histidine. In terms of biological role, catalyzes the condensation of ATP and 5-phosphoribose 1-diphosphate to form N'-(5'-phosphoribosyl)-ATP (PR-ATP). Has a crucial role in the pathway because the rate of histidine biosynthesis seems to be controlled primarily by regulation of HisG enzymatic activity. This Photobacterium profundum (strain SS9) protein is ATP phosphoribosyltransferase (hisG).